A 721-amino-acid polypeptide reads, in one-letter code: Polyribonucleotide nucleotidyltransferase (721 aa).

The Mg(2+) site is built by D495 and D501. The region spanning 562-621 (PRLLSFRIDPELIGTVIGPGGRTIKGITERTNTKIDIEDGGIVTIASHDGAAAEEAQKII) is the KH domain. The S1 motif domain occupies 631–699 (GEIFSGVVTR…SRGRINLTLR (69 aa)). The interval 701 to 721 (VGQNNGMSYPEPTPTPVAPLN) is disordered. Residues 711 to 721 (EPTPTPVAPLN) show a composition bias toward pro residues.

This sequence belongs to the polyribonucleotide nucleotidyltransferase family. Mg(2+) is required as a cofactor.

The protein resides in the cytoplasm. It catalyses the reaction RNA(n+1) + phosphate = RNA(n) + a ribonucleoside 5'-diphosphate. Involved in mRNA degradation. Catalyzes the phosphorolysis of single-stranded polyribonucleotides processively in the 3'- to 5'-direction. The polypeptide is Polyribonucleotide nucleotidyltransferase (Prochlorococcus marinus (strain MIT 9215)).